The primary structure comprises 507 residues: MSIRPDEITSILKNQIEQYQLEVEMAEVGTVTQVGDGIARIYGLDRAMAGELLEFPGDIYGMVLNLEEDNVGAVILGPYTHIKEGDQVKRTGRIVEVPVGEALIGRVVNAMGQPIDGKGPIQTDKFRPVESPAPGVVYRQPVNTPLQTGLKAIDSMVPIGRGQRELIIGDRQTGKTAIAVDTIINQKGQNVICIYVAIGQKASTVAGVVQRLEEAGAMEYTIVVMATASEPAPMLYIAPYAGCTMGEYFMYEQHRDVLCVYDDLSKHAAAYRELSLLLRRPPGREAYPGDVFYLHSRLLERAARLNDSLGGGSLTALPVIETQAGDVSAYIPTNVISITDGQIFLESDLFYAGQRPAINVGLSVSRVGGAAQIKAMKQVAGRLRLDLAQYRELAAFAQFGSDLDKATQARLARGERMMEILKQDQYQPMPVEEQVVVLYAAVNGFLDDLPVARVRAFEKDFLRFLRNERPEVLAGIREKRQLDDNLQEQLKKSIEDFKGSFTAAGES.

Residue Gly-169–Thr-176 participates in ATP binding.

It belongs to the ATPase alpha/beta chains family. As to quaternary structure, F-type ATPases have 2 components, CF(1) - the catalytic core - and CF(0) - the membrane proton channel. CF(1) has five subunits: alpha(3), beta(3), gamma(1), delta(1), epsilon(1). CF(0) has three main subunits: a(1), b(2) and c(9-12). The alpha and beta chains form an alternating ring which encloses part of the gamma chain. CF(1) is attached to CF(0) by a central stalk formed by the gamma and epsilon chains, while a peripheral stalk is formed by the delta and b chains. In this bacterium the a and b subunits are transcribed but do not seem to be translated, thus the ATP synthase consists of the alpha, beta, gamma, delta, epsilon and c subunits.

It localises to the cell membrane. It catalyses the reaction ATP + H2O + 4 H(+)(in) = ADP + phosphate + 5 H(+)(out). Produces ATP from ADP in the presence of a proton gradient across the membrane. The alpha chain is a regulatory subunit. This chain is ATP synthase subunit alpha, found in Moorella thermoacetica (strain ATCC 39073 / JCM 9320).